The chain runs to 78 residues: uncharacterized protein (78 aa).

This is an uncharacterized protein from Amsacta (AmEPV).